We begin with the raw amino-acid sequence, 260 residues long: Metallo-beta-lactamase domain-containing protein 1 (260 aa).

The Zn(2+) site is built by His118, His120, Asp122, His123, His173, Asp196, and His235.

Belongs to the metallo-beta-lactamase superfamily. Glyoxalase II family. As to quaternary structure, homodimer. Zn(2+) serves as cofactor.

It localises to the cytoplasm. Its subcellular location is the cytosol. The protein resides in the nucleus. The catalysed reaction is a ribonucleotidyl-ribonucleotide-RNA + H2O = a 3'-end ribonucleotide-RNA + a 5'-end 5'-phospho-ribonucleoside-RNA + H(+). Its function is as follows. Endoribonuclease that catalyzes the hydrolysis of histone-coding pre-mRNA 3'-end. Involved in histone pre-mRNA processing during the S-phase of the cell cycle, which is required for entering/progressing through S-phase. Cleaves histone pre-mRNA at a major and a minor cleavage site after the 5'-ACCCA-3' and the 5'-ACCCACA-3' sequence, respectively, and located downstream of the stem-loop. May require the presence of the HDE element located at the histone pre-RNA 3'-end to avoid non-specific cleavage. In Mus musculus (Mouse), this protein is Metallo-beta-lactamase domain-containing protein 1.